The sequence spans 396 residues: dTDP-epi-vancosaminyltransferase (396 aa).

A dTDP-beta-L-4-epi-vancosamine-binding site is contributed by 10-12 (SRG). Residues D127, Q133, Y141, and Y169 each contribute to the devancoaminyl-vancomycin site. Residues R207, S230, 277-278 (EV), and 293-298 (HDSAGT) each bind dTDP-beta-L-4-epi-vancosamine.

Belongs to the glycosyltransferase 28 family.

It catalyses the reaction dTDP-beta-L-4-epi-vancosamine + devancoaminyl-vancomycin = chloroorienticin B + dTDP + H(+). It functions in the pathway antibiotic biosynthesis; vancomycin biosynthesis. Functionally, catalyzes the attachment of 4-epi-vancosamine from a TDP donor to the beta-OH-Tyr-6 of the aglycone cosubstrate in the biosynthesis of glycopeptide antibiotic chloroeremomycin, a member of the vancomycin group of antibiotics. Strongly prefers devancoaminyl-vancomycin (DVV) as substrate rather than the heptapeptide vancomycin aglycone (AGV). Acts downstream of GtfB. The protein is dTDP-epi-vancosaminyltransferase (gtfA) of Amycolatopsis orientalis (Nocardia orientalis).